An 89-amino-acid chain; its full sequence is uncharacterized protein (89 aa).

This is an uncharacterized protein from Mycobacterium bovis (strain ATCC BAA-935 / AF2122/97).